A 1626-amino-acid chain; its full sequence is Collagen alpha-1(XXII) chain (1626 aa).

Residues 1–27 (MAGLRGNAVAGLLWMLLLWSGGGGCQA) form the signal peptide. Positions 38–213 (DLVFLLDTSS…NAIDKIRGKL (176 aa)) constitute a VWFA domain. Residues 239-427 (GTKEITGFDL…LQRIVIYCDS (189 aa)) enclose the Laminin G-like domain. The N-linked (GlcNAc...) asparagine glycan is linked to N375. Collagen-like domains are found at residues 481–520 (GEKG…GDVG), 526–565 (QGEK…PGEV), 566–625 (GMRG…PGPS), 657–708 (GEQG…GIPG), 714–773 (GPPG…PGER), 774–833 (GEDG…PGLK), 868–922 (GPKG…GAPG), 925–984 (GAPG…PGKG), 1047–1095 (AGPP…PGKP), 1118–1155 (PPGP…AGPP), 1156–1215 (GLPG…AGPP), 1249–1308 (GKPG…PGKD), 1315–1374 (GPQG…PGEK), 1387–1446 (GEPG…PGPP), 1495–1550 (SQGR…PGAP), and 1575–1604 (DGLP…PPGQ). Disordered stretches follow at residues 506–1002 (PVGA…GPLG), 1019–1103 (GGQC…LLSP), 1119–1458 (PGPP…RGES), and 1491–1609 (YMKS…DPSQ). Residues 544–553 (DGSKGMRGEP) are compositionally biased toward basic and acidic residues. Residues 571–580 (QGPPGLPGPP) show a composition bias toward pro residues. The segment covering 591–606 (ERGEKGTRGEKGERGL) has biased composition (basic and acidic residues). Residues 661–670 (APGPRGHQGA) are compositionally biased toward low complexity. Composition is skewed to pro residues over residues 715–728 (PPGP…PGPG) and 742–751 (KPGPPGPTGP). 2 stretches are compositionally biased toward basic and acidic residues: residues 769 to 778 (EPGERGEDGL) and 815 to 826 (RGEKGDQGEKGE). Low complexity predominate over residues 908–939 (AHGAPGAAGNPGAPGHVGAPGPSGPPGSVGAP). Basic and acidic residues predominate over residues 945–957 (PGKDGERGEKGAA). 2 stretches are compositionally biased toward low complexity: residues 959-974 (EEGS…DPGA) and 1056-1065 (PGDKGSPGSR). Basic and acidic residues-rich tracts occupy residues 1131–1151 (KGDK…KKGE) and 1173–1185 (RGAD…KGDQ). Over residues 1205 to 1223 (ADGIAGAAGPPGIQGSPGK) the composition is skewed to low complexity. The segment covering 1241–1250 (EEGKEGRDGK) has biased composition (basic and acidic residues). A compositionally biased stretch (low complexity) spans 1260–1275 (AGEPGLPGPEGARGPP). Residues 1379 to 1389 (KEGVPGKPGEP) show a composition bias toward low complexity. Basic and acidic residues predominate over residues 1391–1404 (FKGERGDPGIKGDK). Gly residues predominate over residues 1405–1414 (GPPGGKGQPG). Residues 1440–1449 (VGPPGPPGQP) are compositionally biased toward pro residues. Over residues 1521-1530 (GRPGQGGLEG) the composition is skewed to gly residues. Residues 1595–1604 (LPGPPGPPGQ) show a composition bias toward pro residues.

It belongs to the fibril-associated collagens with interrupted helices (FACIT) family. In terms of tissue distribution, restrictive expression is observed at tissue junctions such as the myotendinous junction in skeletal and heart muscle, the articular cartilage-synovial fluid junction, or the border between the anagen hair follicle and the dermis in the skin. It is deposited in the basement membrane zone of the myotendinous junction and the hair follicle and associated with the extrafibrillar matrix in cartilage.

The protein resides in the secreted. Its subcellular location is the extracellular space. It localises to the extracellular matrix. The protein localises to the cytoplasm. In terms of biological role, acts as a cell adhesion ligand for skin epithelial cells and fibroblasts. This is Collagen alpha-1(XXII) chain (COL22A1) from Homo sapiens (Human).